The primary structure comprises 206 residues: Ras-related protein Rab-7a (206 aa).

Residue 15-22 (GDSGVGKT) participates in GTP binding. A phosphoserine mark is found at serine 17 and serine 23. 3 positions are modified to phosphothreonine: threonine 34, threonine 40, and threonine 64. GTP contacts are provided by residues 34–40 (TQQYRAT) and 63–67 (DTAGQ). The short motif at 37–45 (YRATVGADF) is the Effector region element. Serine 72 carries the phosphoserine modification. A phosphotyrosine mark is found at tyrosine 78 and tyrosine 88. Residues 125-128 (NKLD) and 157-158 (AK) each bind GTP. S-geranylgeranyl cysteine attachment occurs at residues cysteine 205 and cysteine 206.

It belongs to the small GTPase superfamily. Rab family.

The protein localises to the cytoplasmic vesicle. It is found in the phagosome membrane. Its subcellular location is the late endosome membrane. It localises to the lysosome membrane. The protein resides in the autophagosome membrane. The protein localises to the lipid droplet. The enzyme catalyses GTP + H2O = GDP + phosphate + H(+). Small GTPase which cycles between active GTP-bound and inactive GDP-bound states. In its active state, binds to a variety of effector proteins playing a key role in the regulation of endo-lysosomal trafficking. Governs early-to-late endosomal maturation, microtubule minus-end as well as plus-end directed endosomal migration and positioning, and endosome-lysosome transport through different protein-protein interaction cascades. Involved in lipophagy, a cytosolic lipase-independent autophagic pathway. Plays a role in phagocyte formation and acidification. The chain is Ras-related protein Rab-7a from Paramecium octaurelia.